A 160-amino-acid chain; its full sequence is Bursicon (160 aa).

Residues 1-20 (MSVLNTFLVIVALILCYVND) form the signal peptide. A CTCK domain is found at 38–131 (CQECQMTAVI…PLQCMCRPCG (94 aa)). Cystine bridges form between Cys41–Cys90, Cys55–Cys104, Cys65–Cys125, Cys69–Cys127, and Cys87–Cys130.

As to quaternary structure, heterodimer of burs and pburs.

The protein localises to the secreted. Final heterodimeric neurohormone released at the end of the molting cycle, involved in the sclerotization (tanning) of the insect cuticle, melanization and wing spreading. The protein is Bursicon of Bombyx mori (Silk moth).